Reading from the N-terminus, the 1051-residue chain is Kinesin-like protein KIN-4B (1051 aa).

Residues 1-21 (MESHSSLSSSSSSSPPSSLSS) form a disordered region. Residues 25–380 (CVKVAVNVRP…LKYANRARNI (356 aa)) form the Kinesin motor domain. 104 to 111 (GQTGSGKT) is an ATP binding site. Coiled-coil stretches lie at residues 414–448 (ATSS…RSKR) and 540–644 (RQHF…KMKQ). Positions 916 to 925 (SSSYSGSSRS) are enriched in low complexity. 2 disordered regions span residues 916 to 946 (SSSY…SSTY) and 1029 to 1051 (MSKS…FQGA).

This sequence belongs to the TRAFAC class myosin-kinesin ATPase superfamily. Kinesin family. KIN-4 subfamily. In terms of assembly, homodimer.

In terms of biological role, kinesin-like motor protein involved in the control of the oriented deposition of cellulose microfibrils. The sequence is that of Kinesin-like protein KIN-4B from Arabidopsis thaliana (Mouse-ear cress).